Reading from the N-terminus, the 680-residue chain is Methionine--tRNA ligase (680 aa).

The short motif at 15–25 (PYANGPVHIGH) is the 'HIGH' region element. Cys147, Cys150, Cys160, and Cys163 together coordinate Zn(2+). Residues 332-336 (KISTS) carry the 'KMSKS' region motif. Thr335 serves as a coordination point for ATP. Residues 578–680 (EFEKLDIRVG…REVKPGSEVK (103 aa)) enclose the tRNA-binding domain.

This sequence belongs to the class-I aminoacyl-tRNA synthetase family. MetG type 1 subfamily. As to quaternary structure, homodimer. Zn(2+) is required as a cofactor.

The protein resides in the cytoplasm. The catalysed reaction is tRNA(Met) + L-methionine + ATP = L-methionyl-tRNA(Met) + AMP + diphosphate. Its function is as follows. Is required not only for elongation of protein synthesis but also for the initiation of all mRNA translation through initiator tRNA(fMet) aminoacylation. This is Methionine--tRNA ligase from Phocaeicola vulgatus (strain ATCC 8482 / DSM 1447 / JCM 5826 / CCUG 4940 / NBRC 14291 / NCTC 11154) (Bacteroides vulgatus).